The primary structure comprises 604 residues: uncharacterized protein (604 aa).

Positions 239–259 are disordered; it reads ELNSPQELNDPQELNNSQDLN.

This is an uncharacterized protein from Escherichia coli (strain K12).